The chain runs to 339 residues: HTH-type transcriptional regulator PtxS (339 aa).

In terms of domain architecture, HTH lacI-type spans Val12–Arg67. A DNA-binding region (H-T-H motif) is located at residues Ile14–Gly33.

In terms of assembly, homodimer in solution.

Its activity is regulated as follows. 2-ketogluconate acts as a molecular effector and causes dissociation of PtxS from its target promoter. Functionally, negatively regulates glucose metabolism by binding directly to the promoter region of the kgu and gad operons. It also negatively regulates its own synthesis. This is HTH-type transcriptional regulator PtxS from Pseudomonas putida (strain ATCC 47054 / DSM 6125 / CFBP 8728 / NCIMB 11950 / KT2440).